A 41-amino-acid polypeptide reads, in one-letter code: MDGLKRYLSSAPILATIWFAITAGILIEFNRFFPDLLFHPL.

A helical transmembrane segment spans residues 7-27 (YLSSAPILATIWFAITAGILI).

The protein belongs to the PsaJ family.

The protein resides in the cellular thylakoid membrane. May help in the organization of the PsaE and PsaF subunits. This is Photosystem I reaction center subunit IX from Synechococcus sp. (strain ATCC 27144 / PCC 6301 / SAUG 1402/1) (Anacystis nidulans).